The following is a 441-amino-acid chain: GTPase Der (441 aa).

2 EngA-type G domains span residues 4 to 168 (PVVA…PEDI) and 177 to 352 (IRIA…EQNS). GTP is bound by residues 10-17 (GRPNVGKS), 57-61 (DTGGI), 121-124 (NKVE), 183-190 (GRPNVGKS), 230-234 (DTAGM), and 295-298 (NKWD). The KH-like domain maps to 353-437 (TRVATATLNT…PIRMIVRQKD (85 aa)).

This sequence belongs to the TRAFAC class TrmE-Era-EngA-EngB-Septin-like GTPase superfamily. EngA (Der) GTPase family. In terms of assembly, associates with the 50S ribosomal subunit.

GTPase that plays an essential role in the late steps of ribosome biogenesis. The sequence is that of GTPase Der from Desulfitobacterium hafniense (strain DSM 10664 / DCB-2).